The following is a 189-amino-acid chain: UPF0301 protein RT0098 (189 aa).

Belongs to the UPF0301 (AlgH) family.

This Rickettsia typhi (strain ATCC VR-144 / Wilmington) protein is UPF0301 protein RT0098.